A 509-amino-acid polypeptide reads, in one-letter code: Zinc finger protein Aiolos (509 aa).

Residues 1–19 (MEDIQTNAELKSTQEQSVP) show a composition bias toward polar residues. Residues 1-86 (MEDIQTNAEL…MGNAEEPEIP (86 aa)) form a disordered region. S22 and S42 each carry phosphoserine. Basic and acidic residues predominate over residues 56–72 (DSMKVKDEYSERDENVL). Glycyl lysine isopeptide (Lys-Gly) (interchain with G-Cter in SUMO2) cross-links involve residues K61, K73, and K100. 3 C2H2-type zinc fingers span residues 118 to 140 (MNCD…KRSH), 146 to 168 (FQCN…IKLH), and 174 to 196 (FKCH…LRTH). The segment at 202–224 (YKCEFCGRSYKQRSSLEEHKERC) adopts a C2H2-type 4; atypical zinc-finger fold. K245 is covalently cross-linked (Glycyl lysine isopeptide (Lys-Gly) (interchain with G-Cter in SUMO2)). T326 is subject to Phosphothreonine. The segment at 364 to 394 (IHLPEKSVPSERGLSPNNSGHDSTDTDSNHE) is disordered. Residue S378 is modified to Phosphoserine. Residues 385–394 (DSTDTDSNHE) show a composition bias toward basic and acidic residues. The C2H2-type 5 zinc finger occupies 452–474 (YRCDHCRVLFLDYVMFTIHMGCH). Residues 452-504 (YRCDHCRVLFLDYVMFTIHMGCHGFRDPFECNMCGYRSHDRYEFSSHIARGEH) form a mediates homodimerization and heterodimerization region. The segment at 480–504 (FECNMCGYRSHDRYEFSSHIARGEH) adopts a C2H2-type 6; atypical zinc-finger fold.

It belongs to the Ikaros C2H2-type zinc-finger protein family. As to quaternary structure, homodimer. Heterodimer with other IKAROS family members. Interacts with IKZF4 and IKZF5. Interacts with IKZF1. Interacts with HRAS. Interacts with FOXP3; this interaction may be required for silencing target genes and regulating the suppressive activity of FOXP3-positive regulatory T-cells (Treg). Interacts with BCL21L isoform Bcl-X(L); this interaction blocks the anti-apoptotic role of BCL21L. Associates with histone deacetylase complexes containing HDAC1, MTA2 and SIN3A. Phosphorylation on tyrosine residues induced by IL2 is required for dissociation from HRAS and nuclear translocation of IKZF3 in T-cells. Phosphorylation on tyrosine residues induced by IL4 is required for dissociation from Bcl-X(L) in T-cells. Expressed most strongly in peripheral blood leukocytes, the spleen, and the thymus.

The protein resides in the nucleus. It is found in the cytoplasm. In terms of biological role, transcription factor that plays an important role in the regulation of lymphocyte differentiation. Plays an essential role in regulation of B-cell differentiation, proliferation and maturation to an effector state. Involved in regulating BCL2 expression and controlling apoptosis in T-cells in an IL2-dependent manner. In Homo sapiens (Human), this protein is Zinc finger protein Aiolos (IKZF3).